Here is a 442-residue protein sequence, read N- to C-terminus: MPGIKVFGGTVLQGSVRVSGAKNATTKLLVASLLSDKRTILKNVPNIEDVQQTVDLCRALGAIVDWDKQAQVIDIHTPRILLSKVPPQFSCVNRIPILLLGALLRRCPYGIFVPILGGDAIGPRTLHFHLEGLKKLGAEIIVSDEGYWAAAPDGLIGAHITLPYPSVGATENLILASVGAQGRTIIKNAALEVEIIDLIVFLQKAGVEITTDNDKTIEIFGCQDFYSVEHSIIPDKIEAASFGMAAVVSQGRVFVEHARHEHMIPFLKALRSIGGGFSVQENGIEFFYDKPLKGGVLLETDVHPGFITDWQQPFAVLLSQAEGCSVIHETVHENRLGYLSGLAKMGAHCDLFHECLSAKSCRYSTGNHPHSAVIHGPTPLQATHLVIPDLRAGFAYVMAALIAEGGVSKIENTKMLDRGYTDWLGNLERLGAKILTEKTRCV.

22-23 (KN) lines the phosphoenolpyruvate pocket. Arg-94 is a UDP-N-acetyl-alpha-D-glucosamine binding site. The Proton donor role is filled by Asp-119. Positions 309 and 331 each coordinate UDP-N-acetyl-alpha-D-glucosamine.

It belongs to the EPSP synthase family. MurA subfamily.

Its subcellular location is the cytoplasm. The catalysed reaction is phosphoenolpyruvate + UDP-N-acetyl-alpha-D-glucosamine = UDP-N-acetyl-3-O-(1-carboxyvinyl)-alpha-D-glucosamine + phosphate. Its pathway is cell wall biogenesis; peptidoglycan biosynthesis. In terms of biological role, cell wall formation. Adds enolpyruvyl to UDP-N-acetylglucosamine. The protein is UDP-N-acetylglucosamine 1-carboxyvinyltransferase of Chlamydia muridarum (strain MoPn / Nigg).